The primary structure comprises 331 residues: Heme A synthase (331 aa).

Helical transmembrane passes span 6–26, 87–107, 124–144, 154–174, 193–213, 251–271, 279–299, and 301–321; these read VAIWLFLCSLMVICMVGIGGF, YVHRLIARLTGLVFILPFIYF, ALLFGILQAFAGWYMVKSGLV, LALHLLLALVIFALLSYQFFD, IWIILILVTVQIIFGAFVAGL, VQFIHRALALLILVLTAILTI, LYVMLFSVIIQVILGIVTLLL, and IPMAIAIAHQMFSFILFGSGL. Residue His-255 coordinates heme. His-309 is a heme binding site.

This sequence belongs to the COX15/CtaA family. Type 2 subfamily. As to quaternary structure, interacts with CtaB. Heme b serves as cofactor.

The protein resides in the cell membrane. It carries out the reaction Fe(II)-heme o + 2 A + H2O = Fe(II)-heme a + 2 AH2. Its pathway is porphyrin-containing compound metabolism; heme A biosynthesis; heme A from heme O: step 1/1. In terms of biological role, catalyzes the conversion of heme O to heme A by two successive hydroxylations of the methyl group at C8. The first hydroxylation forms heme I, the second hydroxylation results in an unstable dihydroxymethyl group, which spontaneously dehydrates, resulting in the formyl group of heme A. In Wolbachia pipientis subsp. Culex pipiens (strain wPip), this protein is Heme A synthase.